The primary structure comprises 118 residues: Ribosome-binding factor A (118 aa).

It belongs to the RbfA family. In terms of assembly, monomer. Binds 30S ribosomal subunits, but not 50S ribosomal subunits or 70S ribosomes.

It localises to the cytoplasm. In terms of biological role, one of several proteins that assist in the late maturation steps of the functional core of the 30S ribosomal subunit. Associates with free 30S ribosomal subunits (but not with 30S subunits that are part of 70S ribosomes or polysomes). Required for efficient processing of 16S rRNA. May interact with the 5'-terminal helix region of 16S rRNA. The sequence is that of Ribosome-binding factor A from Bacillus cereus (strain B4264).